The chain runs to 167 residues: Modulator of smoothened protein (167 aa).

The next 4 membrane-spanning stretches (helical) occupy residues 7–29 (ISGC…PDWI), 68–88 (TLFF…LLVI), 101–121 (WIAF…PVGF), and 139–159 (VGSS…GLLF).

It localises to the cell projection. The protein resides in the cilium membrane. It is found in the cell membrane. Functionally, acts as a negative regulator of hedgehog signaling probably by promoting internalization and subsequent degradation of smoothened protein (SMO) present in the ciliary membrane. Plays a role in sonic hedgehog (SHH)-induced spinal neural progenitor cells differentiation. The polypeptide is Modulator of smoothened protein (Danio rerio (Zebrafish)).